The primary structure comprises 307 residues: Ribonuclease Z (307 aa).

Zn(2+) contacts are provided by histidine 63, histidine 65, aspartate 67, histidine 68, histidine 141, aspartate 212, and histidine 270. Aspartate 67 serves as the catalytic Proton acceptor.

This sequence belongs to the RNase Z family. In terms of assembly, homodimer. Requires Zn(2+) as cofactor.

It carries out the reaction Endonucleolytic cleavage of RNA, removing extra 3' nucleotides from tRNA precursor, generating 3' termini of tRNAs. A 3'-hydroxy group is left at the tRNA terminus and a 5'-phosphoryl group is left at the trailer molecule.. Zinc phosphodiesterase, which displays some tRNA 3'-processing endonuclease activity. Probably involved in tRNA maturation, by removing a 3'-trailer from precursor tRNA. This chain is Ribonuclease Z, found in Bacillus thuringiensis subsp. konkukian (strain 97-27).